We begin with the raw amino-acid sequence, 425 residues long: Serine--tRNA ligase (425 aa).

233–235 contributes to the L-serine binding site; the sequence is TAE. ATP is bound at residue 264–266; it reads RAE. Position 287 (Glu287) interacts with L-serine. ATP is bound at residue 351–354; the sequence is EISS. L-serine is bound at residue Ser387.

The protein belongs to the class-II aminoacyl-tRNA synthetase family. Type-1 seryl-tRNA synthetase subfamily. As to quaternary structure, homodimer. The tRNA molecule binds across the dimer.

The protein localises to the cytoplasm. The catalysed reaction is tRNA(Ser) + L-serine + ATP = L-seryl-tRNA(Ser) + AMP + diphosphate + H(+). The enzyme catalyses tRNA(Sec) + L-serine + ATP = L-seryl-tRNA(Sec) + AMP + diphosphate + H(+). The protein operates within aminoacyl-tRNA biosynthesis; selenocysteinyl-tRNA(Sec) biosynthesis; L-seryl-tRNA(Sec) from L-serine and tRNA(Sec): step 1/1. Functionally, catalyzes the attachment of serine to tRNA(Ser). Is also able to aminoacylate tRNA(Sec) with serine, to form the misacylated tRNA L-seryl-tRNA(Sec), which will be further converted into selenocysteinyl-tRNA(Sec). The sequence is that of Serine--tRNA ligase from Clostridium perfringens (strain ATCC 13124 / DSM 756 / JCM 1290 / NCIMB 6125 / NCTC 8237 / Type A).